A 555-amino-acid polypeptide reads, in one-letter code: Putative ankyrin repeat protein L283 (555 aa).

ANK repeat units follow at residues 364–389 (TKVN…EDDI), 390–420 (VFKK…DINE), 422–447 (IKLA…KVRC), and 455–488 (GYLE…EGGK).

This is Putative ankyrin repeat protein L283 from Acanthamoeba polyphaga mimivirus (APMV).